Reading from the N-terminus, the 704-residue chain is MKRLKLILRRTYLTSTGVNCSFEISRLSRIGKINEARKFFDSLQFKAIGSWNSIVSGYFSNGLPKEARQLFDEMSERNVVSWNGLVSGYIKNRMIVEARNVFELMPERNVVSWTAMVKGYMQEGMVGEAESLFWRMPERNEVSWTVMFGGLIDDGRIDKARKLYDMMPVKDVVASTNMIGGLCREGRVDEARLIFDEMRERNVVTWTTMITGYRQNNRVDVARKLFEVMPEKTEVSWTSMLLGYTLSGRIEDAEEFFEVMPMKPVIACNAMIVGFGEVGEISKARRVFDLMEDRDNATWRGMIKAYERKGFELEALDLFAQMQKQGVRPSFPSLISILSVCATLASLQYGRQVHAHLVRCQFDDDVYVASVLMTMYVKCGELVKAKLVFDRFSSKDIIMWNSIISGYASHGLGEEALKIFHEMPSSGTMPNKVTLIAILTACSYAGKLEEGLEIFESMESKFCVTPTVEHYSCTVDMLGRAGQVDKAMELIESMTIKPDATVWGALLGACKTHSRLDLAEVAAKKLFENEPDNAGTYVLLSSINASRSKWGDVAVVRKNMRTNNVSKFPGCSWIEVGKKVHMFTRGGIKNHPEQAMILMMLEKTDGLLREAGYSPDCSHVLHDVDEEEKVDSLSRHSERLAVAYGLLKLPEGVPIRVMKNLRVCGDCHAAIKLISKVTEREIILRDANRFHHFNNGECSCRDYW.

A mitochondrion-targeting transit peptide spans 1 to 12; it reads MKRLKLILRRTY. PPR repeat units follow at residues 16–46, 47–81, 82–108, 109–143, 144–170, 171–205, 206–232, 233–267, 268–294, 295–329, 330–364, 365–395, 396–430, 431–465, and 467–497; these read TGVNCSFEISRLSRIGKINEARKFFDSLQFK, AIGSWNSIVSGYFSNGLPKEARQLFDEMSERNVVS, WNGLVSGYIKNRMIVEARNVFELMPER, NVVSWTAMVKGYMQEGMVGEAESLFWRMPERNEVS, WTVMFGGLIDDGRIDKARKLYDMMPVK, DVVASTNMIGGLCREGRVDEARLIFDEMRERNVVT, WTTMITGYRQNNRVDVARKLFEVMPEK, TEVSWTSMLLGYTLSGRIEDAEEFFEVMPMKPVIA, CNAMIVGFGEVGEISKARRVFDLMEDR, DNATWRGMIKAYERKGFELEALDLFAQMQKQGVRP, SFPSLISILSVCATLASLQYGRQVHAHLVRCQFDD, DVYVASVLMTMYVKCGELVKAKLVFDRFSSK, DIIMWNSIISGYASHGLGEEALKIFHEMPSSGTMP, NKVTLIAILTACSYAGKLEEGLEIFESMESKFCVT, and TVEHYSCTVDMLGRAGQVDKAMELIESMTIK. Positions 502–577 are type E motif; that stretch reads VWGALLGACK…FPGCSWIEVG (76 aa). A type E(+) motif region spans residues 578-609; sequence KKVHMFTRGGIKNHPEQAMILMMLEKTDGLLR. The type DYW motif stretch occupies residues 610-704; it reads EAGYSPDCSH…NGECSCRDYW (95 aa).

This sequence belongs to the PPR family. PCMP-H subfamily.

Its subcellular location is the mitochondrion. The protein is Pentatricopeptide repeat-containing protein At1g56690, mitochondrial (PCMP-H69) of Arabidopsis thaliana (Mouse-ear cress).